Reading from the N-terminus, the 402-residue chain is Triose phosphate/phosphate translocator, non-green plastid, chloroplastic (402 aa).

A chloroplast-targeting transit peptide spans 1–82 (MQSSAVFSAS…SLDTNRFKTA (82 aa)). Over 83-98 (ATAVPEEGEGSGKMTK) the chain is Chloroplast intermembrane. Residues 99 to 119 (VLELGLLFAMWYLFNIYFNIY) traverse the membrane as a helical segment. An EamA domain is found at 118 to 236 (IYNKQVLKAL…IVGGVALASV (119 aa)). Topologically, residues 120 to 131 (NKQVLKALHAPM) are lumenal. A helical membrane pass occupies residues 132–152 (TVTLVQFAVGSVLITFMWALN). At 153 to 209 (LYKRPKISAAQLAAILPLAVVHTLGNLFTNMSLGKVSVSFTHTIKAMEPFFSVVLSA) the chain is on the chloroplast intermembrane side. Residues 210 to 230 (MFLGEVPTPWVIGSIIPIVGG) traverse the membrane as a helical segment. The Lumenal portion of the chain corresponds to 231–278 (VALASVTEVSFNWAGFLSAMASNLTNQSRNVLSKKVMVKKDDSLDNIT). A helical transmembrane segment spans residues 279–298 (LFSIITLMSLFLMAPVTFFS). The Chloroplast intermembrane segment spans residues 299-374 (EGIKFTPSYI…IFFKTPVSPV (76 aa)). A helical membrane pass occupies residues 375 to 394 (NAFGTGIALAGVFLYSRVKR). The Lumenal segment spans residues 395-402 (IKPKPKTA).

The protein belongs to the TPT transporter family. TPT (TC 2.A.7.9) subfamily. In terms of assembly, homodimer.

It is found in the plastid. The protein localises to the chloroplast membrane. Functionally, mediates the export of fixed carbons from the chloroplasts into the cytosol in the form of triose phosphates. The sequence is that of Triose phosphate/phosphate translocator, non-green plastid, chloroplastic (NGTPT) from Brassica oleracea var. botrytis (Cauliflower).